A 250-amino-acid chain; its full sequence is Anti-Pycsar protein Apyc1 (250 aa).

A beta-lactamase-like region spans residues 19–220 (YNNNALVKCN…AVQEMIMLMH (202 aa)). Zn(2+) contacts are provided by His-61, His-63, Asp-65, His-66, His-146, Asp-166, and His-220.

The protein belongs to the anti-Pycsar protein Apyc1 family. Homodimer. It depends on Zn(2+) as a cofactor.

It catalyses the reaction 3',5'-cyclic CMP + H2O = CMP + H(+). The enzyme catalyses 3',5'-cyclic UMP + H2O = UMP + H(+). Its function is as follows. Counteracts the endogenous Pycsar antiviral defense system. Phosphodiesterase that enables metal-dependent hydrolysis of host cyclic nucleotide Pycsar defense signals such as cCMP and cUMP. The polypeptide is Anti-Pycsar protein Apyc1 (Paenibacillus xerothermodurans).